Consider the following 158-residue polypeptide: uncharacterized protein (158 aa).

The N-terminal stretch at 1-16 (MFRPILILTILSCVLA) is a signal peptide. Asn-122 carries an N-linked (GlcNAc...) asparagine glycan.

This is an uncharacterized protein from Caenorhabditis elegans.